We begin with the raw amino-acid sequence, 90 residues long: Phosphoribosyl-ATP pyrophosphatase (90 aa).

It belongs to the PRA-PH family.

The protein localises to the cytoplasm. The catalysed reaction is 1-(5-phospho-beta-D-ribosyl)-ATP + H2O = 1-(5-phospho-beta-D-ribosyl)-5'-AMP + diphosphate + H(+). Its pathway is amino-acid biosynthesis; L-histidine biosynthesis; L-histidine from 5-phospho-alpha-D-ribose 1-diphosphate: step 2/9. The polypeptide is Phosphoribosyl-ATP pyrophosphatase (Streptomyces avermitilis (strain ATCC 31267 / DSM 46492 / JCM 5070 / NBRC 14893 / NCIMB 12804 / NRRL 8165 / MA-4680)).